A 258-amino-acid chain; its full sequence is 5-oxoprolinase subunit A (258 aa).

It belongs to the LamB/PxpA family. As to quaternary structure, forms a complex composed of PxpA, PxpB and PxpC.

It carries out the reaction 5-oxo-L-proline + ATP + 2 H2O = L-glutamate + ADP + phosphate + H(+). Its function is as follows. Catalyzes the cleavage of 5-oxoproline to form L-glutamate coupled to the hydrolysis of ATP to ADP and inorganic phosphate. This is 5-oxoprolinase subunit A from Deinococcus radiodurans (strain ATCC 13939 / DSM 20539 / JCM 16871 / CCUG 27074 / LMG 4051 / NBRC 15346 / NCIMB 9279 / VKM B-1422 / R1).